A 132-amino-acid polypeptide reads, in one-letter code: Small ribosomal subunit protein uS8c (132 aa).

This sequence belongs to the universal ribosomal protein uS8 family. Part of the 30S ribosomal subunit.

The protein resides in the plastid. The protein localises to the chloroplast. Functionally, one of the primary rRNA binding proteins, it binds directly to 16S rRNA central domain where it helps coordinate assembly of the platform of the 30S subunit. This Zygnema circumcarinatum (Green alga) protein is Small ribosomal subunit protein uS8c (rps8).